The sequence spans 333 residues: Zinc-type alcohol dehydrogenase-like protein SACOL2177 (333 aa).

It belongs to the zinc-containing alcohol dehydrogenase family. Quinone oxidoreductase subfamily.

The protein is Zinc-type alcohol dehydrogenase-like protein SACOL2177 of Staphylococcus aureus (strain COL).